Here is a 340-residue protein sequence, read N- to C-terminus: Glycerol-3-phosphate dehydrogenase [NAD(P)+] (340 aa).

The NADPH site is built by serine 14, phenylalanine 15, arginine 35, and lysine 109. Residues lysine 109 and glycine 137 each contribute to the sn-glycerol 3-phosphate site. Alanine 141 contacts NADPH. Residues lysine 192, aspartate 245, serine 255, arginine 256, and asparagine 257 each coordinate sn-glycerol 3-phosphate. Lysine 192 (proton acceptor) is an active-site residue. Residue arginine 256 coordinates NADPH. 2 residues coordinate NADPH: valine 280 and glutamate 282.

It belongs to the NAD-dependent glycerol-3-phosphate dehydrogenase family.

The protein resides in the cytoplasm. It carries out the reaction sn-glycerol 3-phosphate + NAD(+) = dihydroxyacetone phosphate + NADH + H(+). The catalysed reaction is sn-glycerol 3-phosphate + NADP(+) = dihydroxyacetone phosphate + NADPH + H(+). Its pathway is membrane lipid metabolism; glycerophospholipid metabolism. Its function is as follows. Catalyzes the reduction of the glycolytic intermediate dihydroxyacetone phosphate (DHAP) to sn-glycerol 3-phosphate (G3P), the key precursor for phospholipid synthesis. This Teredinibacter turnerae (strain ATCC 39867 / T7901) protein is Glycerol-3-phosphate dehydrogenase [NAD(P)+].